The chain runs to 283 residues: Protein canopy homolog 3 (283 aa).

The signal sequence occupies residues 1 to 35 (MEPLPEPTSRPRLRPRPRCLLLLPLLLLLLLLLPA). The Saposin B-type domain occupies 55-276 (SKCEVCKYVA…EGIQKASPLT (222 aa)). N-linked (GlcNAc...) asparagine glycosylation is present at Asn-161. A coiled-coil region spans residues 161–187 (NETSAEVADLKKQCDVLVEEFEEVIED). Residues 223-283 (KGDTAALGGK…PLTHSPPDEL (61 aa)) form a disordered region.

Belongs to the canopy family. In terms of assembly, interacts with HSP90B1; this interaction is disrupted in the presence of ATP. Interacts with TLR1, TLR2, TLR4 and TLR9.

Its subcellular location is the endoplasmic reticulum. Toll-like receptor (TLR)-specific co-chaperone for HSP90B1. Required for proper TLR folding, except that of TLR3, and hence controls TLR exit from the endoplasmic reticulum. Consequently, required for both innate and adaptive immune responses. The chain is Protein canopy homolog 3 (CNPY3) from Sus scrofa (Pig).